We begin with the raw amino-acid sequence, 269 residues long: Activator of basal transcription 1 (269 aa).

Residues 1–40 (MVKAGELVEQQKAAMEEEANAEAAEDQEEPEDTACSSSSK) form a disordered region. Residues 5–29 (GELVEQQKAAMEEEANAEAAEDQEE) adopt a coiled-coil conformation. A compositionally biased stretch (acidic residues) spans 16–32 (EEEANAEAAEDQEEPED). An RRM domain is found at 48–145 (GIVYLGHVPP…RKRSPFRYDL (98 aa)). A coiled-coil region spans residues 164–194 (AFERQVRRQRLRAEVAQAKRETDFYLRNVEQ). The segment at 220–244 (EQEFRARKAARPGGRERARLANVED) is disordered.

Belongs to the ESF2/ABP1 family. As to quaternary structure, interacts with ESF1/ABTAP. Interacts with IGHMBP2. Ubiquitously expressed.

It localises to the nucleus. It is found in the nucleolus. Its function is as follows. Could be a novel TATA-binding protein (TBP) which can function as a basal transcription activator. Can act as a regulator of basal transcription for class II genes. This chain is Activator of basal transcription 1 (Abt1), found in Mus musculus (Mouse).